Here is a 902-residue protein sequence, read N- to C-terminus: Cytosolic 10-formyltetrahydrofolate dehydrogenase (902 aa).

The interval 1–310 is hydrolase domain; that stretch reads MKIAVIGQSL…PASQYFKTAD (310 aa). (6R)-10-formyltetrahydrofolate is bound at residue 88-90; the sequence is QFI. The active-site Proton donor is H106. Position 142 (D142) interacts with (6R)-10-formyltetrahydrofolate. The region spanning 318-395 is the Carrier domain; the sequence is EEEQKVSEEI…EFIQMVVRRM (78 aa). An O-(pantetheine 4'-phosphoryl)serine modification is found at S354. The interval 417-902 is aldehyde dehydrogenase domain; it reads TVKIPHQLFI…LKTKAVTIEY (486 aa). NADP(+)-binding positions include 571–573, 597–600, 630–635, 650–651, and 673–674; these read IPW, KPAQ, GSLIGQ, GS, and EL. The active-site Proton acceptor is the E673. C707 functions as the Proton donor in the catalytic mechanism. NADP(+)-binding positions include K757 and 804–806; that span reads ESF.

The protein in the N-terminal section; belongs to the GART family. In the C-terminal section; belongs to the aldehyde dehydrogenase family. ALDH1L subfamily. As to quaternary structure, homotetramer. Post-translationally, phosphopantetheinylation at Ser-354 by AASDHPPT is required for the formyltetrahydrofolate dehydrogenase activity.

Its subcellular location is the cytoplasm. The protein resides in the cytosol. It catalyses the reaction (6R)-10-formyltetrahydrofolate + NADP(+) + H2O = (6S)-5,6,7,8-tetrahydrofolate + CO2 + NADPH + H(+). Its function is as follows. Cytosolic 10-formyltetrahydrofolate dehydrogenase that catalyzes the NADP(+)-dependent conversion of 10-formyltetrahydrofolate to tetrahydrofolate and carbon dioxide. May also have an NADP(+)-dependent aldehyde dehydrogenase activity towards formaldehyde, acetaldehyde, propionaldehyde, and benzaldehyde. This Xenopus laevis (African clawed frog) protein is Cytosolic 10-formyltetrahydrofolate dehydrogenase (aldh1l1).